The chain runs to 328 residues: Glucan endo-1,3-beta-glucosidase, basic isoform 3 (328 aa).

E85 acts as the Proton donor in catalysis. E230 functions as the Nucleophile in the catalytic mechanism. Residues 306-328 (VSERVWDISAETNSTTSSLISEM) constitute a propeptide, removed in mature form. N318 carries an N-linked (GlcNAc...) asparagine glycan.

This sequence belongs to the glycosyl hydrolase 17 family.

Its subcellular location is the vacuole. It carries out the reaction Hydrolysis of (1-&gt;3)-beta-D-glucosidic linkages in (1-&gt;3)-beta-D-glucans.. Functionally, is thought to be an important plant defense-related product against fungal pathogens. The polypeptide is Glucan endo-1,3-beta-glucosidase, basic isoform 3 (GLUB3) (Solanum tuberosum (Potato)).